A 316-amino-acid chain; its full sequence is Acetyl-coenzyme A carboxylase carboxyl transferase subunit beta, chloroplastic (316 aa).

A CoA carboxyltransferase N-terminal domain is found at 47 to 316; sequence LWTRCDNCEN…CKKFQNSFFK (270 aa). Residues C51, C54, C70, and C73 each contribute to the Zn(2+) site. A C4-type zinc finger spans residues 51 to 73; the sequence is CDNCENMLYVRFLRQNKRICEEC.

This sequence belongs to the AccD/PCCB family. Acetyl-CoA carboxylase is a heterohexamer composed of biotin carboxyl carrier protein, biotin carboxylase and 2 subunits each of ACCase subunit alpha and ACCase plastid-coded subunit beta (accD). Zn(2+) is required as a cofactor.

It is found in the plastid. Its subcellular location is the chloroplast stroma. The catalysed reaction is N(6)-carboxybiotinyl-L-lysyl-[protein] + acetyl-CoA = N(6)-biotinyl-L-lysyl-[protein] + malonyl-CoA. It participates in lipid metabolism; malonyl-CoA biosynthesis; malonyl-CoA from acetyl-CoA: step 1/1. Component of the acetyl coenzyme A carboxylase (ACC) complex. Biotin carboxylase (BC) catalyzes the carboxylation of biotin on its carrier protein (BCCP) and then the CO(2) group is transferred by the transcarboxylase to acetyl-CoA to form malonyl-CoA. The sequence is that of Acetyl-coenzyme A carboxylase carboxyl transferase subunit beta, chloroplastic from Marchantia polymorpha (Common liverwort).